We begin with the raw amino-acid sequence, 473 residues long: Membrane-bound acylglycerophosphatidylinositol O-acyltransferase MBOAT7 (473 aa).

At 1–5 (MTPEE) the chain is on the cytoplasmic side. Residues 6 to 22 (WTYLMVLLISIPVGFLF) form a helical membrane-spanning segment. At 23–33 (KKAGPGLKRWG) the chain is on the lumenal side. The helical transmembrane segment at 34-57 (AAAVGLGLTLFTCGPHSLHSLITI) threads the bilayer. At 58–73 (LGTWALIQAQPCSCHA) the chain is on the cytoplasmic side. A helical membrane pass occupies residues 74–93 (LALAWTFSYLLFFRALSLLG). The Lumenal segment spans residues 94-194 (LPTPTPFTNA…VPSLRPLLRR (101 aa)). Residues 195–212 (AWPAPLFGLLFLLSSHLF) traverse the membrane as a helical segment. Residues 213–231 (PLEAVREDAFYARPLPTRL) are Cytoplasmic-facing. The chain crosses the membrane as a helical span at residues 232–261 (FYMIPVFFAFRMRFYVAWIAAECGCIAAGF). The Lumenal segment spans residues 262-426 (GAYPVAAKAR…LSMADTLRYW (165 aa)). N-linked (GlcNAc...) asparagine glycosylation occurs at N321. Residues 427-447 (ASIYFWVHFLALACLGLGLVL) traverse the membrane as a helical segment. At 448-473 (GGGSPSKRKTPSQATSSQAKEKLREE) the chain is on the cytoplasmic side. The disordered stretch occupies residues 451-473 (SPSKRKTPSQATSSQAKEKLREE).

The protein belongs to the membrane-bound acyltransferase family. In terms of assembly, interacts with SPTSSA; the interaction facilitates MBOAT7 location to mitochondria-associated membranes (MAMs).

Its subcellular location is the endoplasmic reticulum membrane. It carries out the reaction a 1-acyl-sn-glycero-3-phospho-(1D-myo-inositol) + an acyl-CoA = a 1,2-diacyl-sn-glycero-3-phospho-(1D-myo-inositol) + CoA. The enzyme catalyses 1-octadecanoyl-sn-glycero-3-phospho-(1D-myo-inositol) + (5Z,8Z,11Z,14Z)-eicosatetraenoyl-CoA = 1-octadecanoyl-2-(5Z,8Z,11Z,14Z-eicosatetraenoyl)-sn-glycero-3-phospho-(1D-myo-inositol) + CoA. It catalyses the reaction a 1-acyl-sn-glycero-3-phospho-(1D-myo-inositol) + (5Z,8Z,11Z,14Z)-eicosatetraenoyl-CoA = a 1-acyl-2-(5Z,8Z,11Z,14Z-eicosatetraenoyl)-sn-glycero-3-phospho-(1D-myo-inositol) + CoA. The catalysed reaction is (5Z,8Z,11Z,14Z)-eicosatetraenoyl-CoA + 1-hexadecanoyl-sn-glycero-3-phosphocholine = 1-hexadecanoyl-2-(5Z,8Z,11Z,14Z-eicosatetraenoyl)-sn-glycero-3-phosphocholine + CoA. Its pathway is lipid metabolism; phospholipid metabolism. In terms of biological role, acyltransferase which catalyzes the transfer of an acyl group from an acyl-CoA to a lysophosphatidylinositol (1-acylglycerophosphatidylinositol or LPI) leading to the production of a phosphatidylinositol (1,2-diacyl-sn-glycero-3-phosphoinositol or PI) and participates in the reacylation step of the phospholipid remodeling pathway also known as the Lands cycle. Prefers arachidonoyl-CoA as the acyl donor, thus contributing to the regulation of free levels arachidonic acid in cell. In liver, participates in the regulation of triglyceride metabolism through the phosphatidylinositol acyl-chain remodeling regulation. This Mus musculus (Mouse) protein is Membrane-bound acylglycerophosphatidylinositol O-acyltransferase MBOAT7.